The sequence spans 249 residues: 2,3-bisphosphoglycerate-dependent phosphoglycerate mutase (249 aa).

Substrate is bound by residues 8–15 (RHGESTWN), 21–22 (TG), R60, 87–90 (ERHY), K98, 114–115 (RR), and 183–184 (GN). H9 acts as the Tele-phosphohistidine intermediate in catalysis. Catalysis depends on E87, which acts as the Proton donor/acceptor.

Belongs to the phosphoglycerate mutase family. BPG-dependent PGAM subfamily. Homodimer.

It carries out the reaction (2R)-2-phosphoglycerate = (2R)-3-phosphoglycerate. It participates in carbohydrate degradation; glycolysis; pyruvate from D-glyceraldehyde 3-phosphate: step 3/5. Catalyzes the interconversion of 2-phosphoglycerate and 3-phosphoglycerate. The chain is 2,3-bisphosphoglycerate-dependent phosphoglycerate mutase from Aromatoleum aromaticum (strain DSM 19018 / LMG 30748 / EbN1) (Azoarcus sp. (strain EbN1)).